The sequence spans 188 residues: Glandular kallikrein-3, submandibular (188 aa).

The 185-residue stretch at 1–185 (NYHVLLGQNN…FTSWIKEVMK (185 aa)) folds into the Peptidase S1 domain. 2 N-linked (GlcNAc...) asparagine glycosylation sites follow: asparagine 10 and asparagine 36. The active-site Charge relay system is aspartate 47. 3 disulfides stabilise this stretch: cysteine 79–cysteine 146, cysteine 111–cysteine 125, and cysteine 136–cysteine 161. The Charge relay system role is filled by serine 140.

This sequence belongs to the peptidase S1 family. Kallikrein subfamily.

It carries out the reaction Preferential cleavage of Arg-|-Xaa bonds in small molecule substrates. Highly selective action to release kallidin (lysyl-bradykinin) from kininogen involves hydrolysis of Met-|-Xaa or Leu-|-Xaa.. Its function is as follows. Glandular kallikreins cleave Met-Lys and Arg-Ser bonds in kininogen to release Lys-bradykinin. The sequence is that of Glandular kallikrein-3, submandibular (Klk3) from Rattus norvegicus (Rat).